The primary structure comprises 363 residues: Pyrimidine monooxygenase RutA (363 aa).

FMN is bound by residues 49-50 (IK), N115, E124, 140-141 (RY), and S190.

Belongs to the NtaA/SnaA/DszA monooxygenase family. RutA subfamily.

The catalysed reaction is uracil + FMNH2 + NADH + O2 = (Z)-3-ureidoacrylate + FMN + NAD(+) + H2O + H(+). It carries out the reaction thymine + FMNH2 + NADH + O2 = (Z)-2-methylureidoacrylate + FMN + NAD(+) + H2O + H(+). Its function is as follows. Catalyzes the pyrimidine ring opening between N-3 and C-4 by an unusual flavin hydroperoxide-catalyzed mechanism, adding oxygen atoms in the process to yield ureidoacrylate peracid, that immediately reacts with FMN forming ureidoacrylate and FMN-N(5)-oxide. The FMN-N(5)-oxide reacts spontaneously with NADH to produce FMN. Requires the flavin reductase RutF to regenerate FMN in vivo. The sequence is that of Pyrimidine monooxygenase RutA from Escherichia coli O6:K15:H31 (strain 536 / UPEC).